The chain runs to 350 residues: Nuclear pore complex-interacting protein family member A1 (350 aa).

Positions 306–325 (KTPPECLLTPLPPSAPPSVD) are disordered.

It belongs to the NPIP family. In terms of assembly, may associate with the nuclear pore complex. As to expression, widely expressed.

It localises to the nucleus. The protein resides in the nuclear pore complex. Its subcellular location is the nucleus membrane. The chain is Nuclear pore complex-interacting protein family member A1 (NPIPA1) from Homo sapiens (Human).